A 601-amino-acid chain; its full sequence is 4-hydroxy-3-methylbut-2-en-1-yl diphosphate synthase (flavodoxin) (601 aa).

[4Fe-4S] cluster contacts are provided by C507, C510, C542, and E549.

Belongs to the IspG family. It depends on [4Fe-4S] cluster as a cofactor.

The catalysed reaction is (2E)-4-hydroxy-3-methylbut-2-enyl diphosphate + oxidized [flavodoxin] + H2O + 2 H(+) = 2-C-methyl-D-erythritol 2,4-cyclic diphosphate + reduced [flavodoxin]. Its pathway is isoprenoid biosynthesis; isopentenyl diphosphate biosynthesis via DXP pathway; isopentenyl diphosphate from 1-deoxy-D-xylulose 5-phosphate: step 5/6. Its function is as follows. Converts 2C-methyl-D-erythritol 2,4-cyclodiphosphate (ME-2,4cPP) into 1-hydroxy-2-methyl-2-(E)-butenyl 4-diphosphate. This is 4-hydroxy-3-methylbut-2-en-1-yl diphosphate synthase (flavodoxin) from Chlamydia muridarum (strain MoPn / Nigg).